The chain runs to 100 residues: Aspartyl/glutamyl-tRNA(Asn/Gln) amidotransferase subunit C (100 aa).

This sequence belongs to the GatC family. Heterotrimer of A, B and C subunits.

It carries out the reaction L-glutamyl-tRNA(Gln) + L-glutamine + ATP + H2O = L-glutaminyl-tRNA(Gln) + L-glutamate + ADP + phosphate + H(+). The enzyme catalyses L-aspartyl-tRNA(Asn) + L-glutamine + ATP + H2O = L-asparaginyl-tRNA(Asn) + L-glutamate + ADP + phosphate + 2 H(+). In terms of biological role, allows the formation of correctly charged Asn-tRNA(Asn) or Gln-tRNA(Gln) through the transamidation of misacylated Asp-tRNA(Asn) or Glu-tRNA(Gln) in organisms which lack either or both of asparaginyl-tRNA or glutaminyl-tRNA synthetases. The reaction takes place in the presence of glutamine and ATP through an activated phospho-Asp-tRNA(Asn) or phospho-Glu-tRNA(Gln). The polypeptide is Aspartyl/glutamyl-tRNA(Asn/Gln) amidotransferase subunit C (Rickettsia felis (strain ATCC VR-1525 / URRWXCal2) (Rickettsia azadi)).